The following is a 330-amino-acid chain: D-lactate dehydrogenase (330 aa).

Residues 156 to 157, aspartate 176, 206 to 207, 233 to 235, and aspartate 259 contribute to the NAD(+) site; these read RI, VP, and AAR. The active site involves arginine 235. The active site involves glutamate 264. Histidine 296 acts as the Proton donor in catalysis.

The protein belongs to the D-isomer specific 2-hydroxyacid dehydrogenase family.

The catalysed reaction is (R)-lactate + NAD(+) = pyruvate + NADH + H(+). In Staphylococcus aureus (strain Mu50 / ATCC 700699), this protein is D-lactate dehydrogenase (ldhD).